Consider the following 167-residue polypeptide: LIM domain transcription factor LMO4.1 (167 aa).

Residues 1–17 are compositionally biased toward polar residues; the sequence is MVNNRVTESTTTAVSSN. The segment at 1–20 is disordered; it reads MVNNRVTESTTTAVSSNGGP. LIM zinc-binding domains are found at residues 22–84 and 86–148; these read KACA…LFGS and GACS…GLLS.

Functionally, acts as a positive cofactor of GATA transcription factors to establish the identity of the ventral mesoderm during gastrulation. Down-regulation in the dorsal mesoderm is necessary for the proper formation of this territory since, when present, lmo4 may bind ldb1 and restrict the availability of this cofactor for Spemman organizer transcription factors. At neurula stages, suppresses primary neuron differentiation and modulates gene expression at the Isthmic Organizer of the midbrain-hindbrain boundary. The polypeptide is LIM domain transcription factor LMO4.1 (lmo4.1) (Xenopus tropicalis (Western clawed frog)).